We begin with the raw amino-acid sequence, 66 residues long: MPKQKTHSGLKKRIKITATGKLMRHQAYSNHLAASKTTKQNRQLSAETTVHATDAKRIKRLIANMK.

This sequence belongs to the bacterial ribosomal protein bL35 family.

The polypeptide is Large ribosomal subunit protein bL35 (Acholeplasma laidlawii (strain PG-8A)).